Here is a 338-residue protein sequence, read N- to C-terminus: Flap endonuclease 1 (338 aa).

The tract at residues 1–98 (MGTDIGDLLQ…ETLSRRKEVR (98 aa)) is N-domain. Positions 27, 80, 152, 154, 173, 175, and 236 each coordinate Mg(2+). Residues 116-257 (AAYKYAQASS…TALKLIKKHG (142 aa)) are I-domain. An interaction with PCNA region spans residues 330–338 (RQKTLDQWF).

The protein belongs to the XPG/RAD2 endonuclease family. FEN1 subfamily. In terms of assembly, interacts with PCNA. PCNA stimulates the nuclease activity without altering cleavage specificity. Mg(2+) is required as a cofactor.

Structure-specific nuclease with 5'-flap endonuclease and 5'-3' exonuclease activities involved in DNA replication and repair. During DNA replication, cleaves the 5'-overhanging flap structure that is generated by displacement synthesis when DNA polymerase encounters the 5'-end of a downstream Okazaki fragment. Binds the unpaired 3'-DNA end and kinks the DNA to facilitate 5' cleavage specificity. Cleaves one nucleotide into the double-stranded DNA from the junction in flap DNA, leaving a nick for ligation. Also involved in the base excision repair (BER) pathway. Acts as a genome stabilization factor that prevents flaps from equilibrating into structures that lead to duplications and deletions. Also possesses 5'-3' exonuclease activity on nicked or gapped double-stranded DNA. This is Flap endonuclease 1 from Methanosarcina acetivorans (strain ATCC 35395 / DSM 2834 / JCM 12185 / C2A).